The following is a 660-amino-acid chain: MSEKRKSNKIIGIDLGTTNSCVSVMEGGQPKVIASSEGTRTTPSIVAFKGGETLVGIPAKRQAVTNPEKTLASTKRFIGRKFSEVESEIKTVPYKVAPNSKGDAVFDVEQKLYTPEEIGAQILMKMKETAEAYLGETVTEAVITVPAYFNDSQRASTKDAGRIAGLDVKRIIPEPTAAALAYGIDKEGDKKIAVFDLGGGTFDISILEIGDGVFEVLSTNGDTHLGGDDFDGVIINWMLDEFKKQEGIDLSKDNMALQRLKDAAEKAKIELSGVSSTEINQPFITIDANGPKHLALTLTRAQFEHLASSLIERTKQPCAQALKDAKLSASDIDDVLLVGGMSRMPAVQAVVKEIFGKEPNKGVNPDEVVAIGAAIQGGVLGGEVKDVLLLDVIPLSLGIETLGGVMTPLVERNTTIPTQKKQIFSTAADNQPAVTIVVLQGERPMAKDNKEIGRFDLTDIPPAPRGHPQIEVTFDIDANGILHVSAKDAASGREQKIRIEASSGLKEDEIQQMIRDAELHKEEDKQRKEASDVKNEADGMIFRAEKAVKDYHDKIPAELVKEIEEHIEKVRQAIKEDASTTAIKAASDELSTRMQKIGEAMQAQSASAAASSAANAQGGPNINSEDLKKHSFSTRPPAGGSASSTDNIEDADVEIVDKPE.

Phosphothreonine; by autocatalysis is present on threonine 201. The segment at 599–660 (EAMQAQSASA…ADVEIVDKPE (62 aa)) is disordered. Residues 600 to 617 (AMQAQSASAAASSAANAQ) show a composition bias toward low complexity.

The protein belongs to the heat shock protein 70 family.

In terms of biological role, acts as a chaperone. The chain is Chaperone protein DnaK from Chlamydia trachomatis serovar A (strain ATCC VR-571B / DSM 19440 / HAR-13).